The primary structure comprises 217 residues: ATP-dependent Clp protease proteolytic subunit 2 (217 aa).

Catalysis depends on S121, which acts as the Nucleophile. H146 is an active-site residue.

Belongs to the peptidase S14 family. Fourteen ClpP subunits assemble into 2 heptameric rings which stack back to back to give a disk-like structure with a central cavity, resembling the structure of eukaryotic proteasomes.

Its subcellular location is the cytoplasm. The catalysed reaction is Hydrolysis of proteins to small peptides in the presence of ATP and magnesium. alpha-casein is the usual test substrate. In the absence of ATP, only oligopeptides shorter than five residues are hydrolyzed (such as succinyl-Leu-Tyr-|-NHMec, and Leu-Tyr-Leu-|-Tyr-Trp, in which cleavage of the -Tyr-|-Leu- and -Tyr-|-Trp bonds also occurs).. Functionally, cleaves peptides in various proteins in a process that requires ATP hydrolysis. Has a chymotrypsin-like activity. Plays a major role in the degradation of misfolded proteins. The protein is ATP-dependent Clp protease proteolytic subunit 2 of Paraburkholderia xenovorans (strain LB400).